A 485-amino-acid polypeptide reads, in one-letter code: Aspartyl/glutamyl-tRNA(Asn/Gln) amidotransferase subunit B (485 aa).

It belongs to the GatB/GatE family. GatB subfamily. As to quaternary structure, heterotrimer of A, B and C subunits.

The catalysed reaction is L-glutamyl-tRNA(Gln) + L-glutamine + ATP + H2O = L-glutaminyl-tRNA(Gln) + L-glutamate + ADP + phosphate + H(+). It carries out the reaction L-aspartyl-tRNA(Asn) + L-glutamine + ATP + H2O = L-asparaginyl-tRNA(Asn) + L-glutamate + ADP + phosphate + 2 H(+). In terms of biological role, allows the formation of correctly charged Asn-tRNA(Asn) or Gln-tRNA(Gln) through the transamidation of misacylated Asp-tRNA(Asn) or Glu-tRNA(Gln) in organisms which lack either or both of asparaginyl-tRNA or glutaminyl-tRNA synthetases. The reaction takes place in the presence of glutamine and ATP through an activated phospho-Asp-tRNA(Asn) or phospho-Glu-tRNA(Gln). This chain is Aspartyl/glutamyl-tRNA(Asn/Gln) amidotransferase subunit B, found in Borreliella afzelii (strain PKo) (Borrelia afzelii).